The chain runs to 37 residues: Large ribosomal subunit protein bL36c (37 aa).

This sequence belongs to the bacterial ribosomal protein bL36 family.

It localises to the plastid. The sequence is that of Large ribosomal subunit protein bL36c from Cuscuta gronovii (Common dodder).